Here is a 105-residue protein sequence, read N- to C-terminus: Serine protease inhibitor Kazal-type 6 (105 aa).

The first 23 residues, 1 to 23 (MKVAGVFLLLSLALLCFFSGAFS), serve as a signal peptide directing secretion. Position 24 is a pyrrolidone carboxylic acid (Gln-24). The region spanning 49-105 (RLFQINCGEFRDPKVFCTRESDPLCGSDGQTYGNKCAFCKALEKSSGKINLKHRGKC) is the Kazal-like domain. 3 cysteine pairs are disulfide-bonded: Cys-55–Cys-87, Cys-65–Cys-84, and Cys-73–Cys-105.

As to expression, expressed in the upper epidermis and in skin appendages.

Its subcellular location is the secreted. In terms of biological role, serine protease inhibitor selective for kallikreins. Efficiently inhibits KLK5 and human KLK2, KLK4, KLK5, KLK6, KLK7, KLK12, KLK13 and KLK14. Doesn't inhibit human KLK1 and KLK8. The sequence is that of Serine protease inhibitor Kazal-type 6 (Spink6) from Mus musculus (Mouse).